The primary structure comprises 173 residues: Translationally-controlled tumor protein homolog (173 aa).

The region spanning 1–173 (MIIYKDILTG…WKHGLEEYKV (173 aa)) is the TCTP domain.

The protein belongs to the TCTP family.

It is found in the cytoplasm. The protein resides in the cytoskeleton. Its function is as follows. Involved in protein synthesis. Involved in microtubule stabilization. The polypeptide is Translationally-controlled tumor protein homolog (Aspergillus oryzae (strain ATCC 42149 / RIB 40) (Yellow koji mold)).